The chain runs to 148 residues: Leghemoglobin 3 (148 aa).

A Globin domain is found at G2–S148. At Y30 the chain carries Nitrated tyrosine. A heme b-binding site is contributed by S45. S45 is subject to Phosphoserine. H63 is an O2 binding site. The heme b site is built by K66, H95, and K98. Y136 is modified (nitrated tyrosine).

It belongs to the plant globin family. Monomer. Post-translationally, nitrated in effective nodules and particularly in hypoxic conditions; this mechanism may play a protective role in the symbiosis by buffering toxic peroxynitrite NO(2)(-). Nitration level decrease during nodule senescence. Phosphorylation at Ser-45 disrupts the molecular environment of its porphyrin ring oxygen binding pocket, thus leading to a reduced oxygen consumption and to the delivery of oxygen O(2) to symbiosomes. In terms of tissue distribution, stem nodules.

The protein resides in the cytoplasm. It is found in the cytosol. The protein localises to the nucleus. Leghemoglobin that reversibly binds oxygen O(2) through a pentacoordinated heme iron. In stem nodules, facilitates the diffusion of oxygen to the bacteroids while preventing the bacterial nitrogenase from being inactivated by buffering dioxygen, nitric oxide and carbon monoxide, and promoting the formation of reactive oxygen species (ROS, e.g. H(2)O(2)). This role is essential for symbiotic nitrogen fixation (SNF). The chain is Leghemoglobin 3 from Sesbania rostrata.